A 309-amino-acid polypeptide reads, in one-letter code: Ribonuclease Z (309 aa).

Residues histidine 63, histidine 65, aspartate 67, histidine 68, histidine 145, aspartate 216, and histidine 274 each contribute to the Zn(2+) site. Aspartate 67 functions as the Proton acceptor in the catalytic mechanism.

Belongs to the RNase Z family. As to quaternary structure, homodimer. Zn(2+) is required as a cofactor.

The enzyme catalyses Endonucleolytic cleavage of RNA, removing extra 3' nucleotides from tRNA precursor, generating 3' termini of tRNAs. A 3'-hydroxy group is left at the tRNA terminus and a 5'-phosphoryl group is left at the trailer molecule.. Functionally, zinc phosphodiesterase, which displays some tRNA 3'-processing endonuclease activity. Probably involved in tRNA maturation, by removing a 3'-trailer from precursor tRNA. This chain is Ribonuclease Z, found in Streptococcus agalactiae serotype Ia (strain ATCC 27591 / A909 / CDC SS700).